The following is a 1169-amino-acid chain: Chromosome partition protein Smc (1169 aa).

32-39 serves as a coordination point for ATP; sequence PNGCGKSN. Coiled coils occupy residues 170 to 265 and 307 to 481; these read ISKY…TGEE and IRHT…ERLN. The SMC hinge domain occupies 525-620; it reads DRLGEKIEVA…CASDPAEAAE (96 aa). 2 coiled-coil regions span residues 656–914 and 985–1014; these read ALAR…MKLA and RYLE…ECRA.

The protein belongs to the SMC family. Homodimer.

Its subcellular location is the cytoplasm. Required for chromosome condensation and partitioning. The polypeptide is Chromosome partition protein Smc (Methylococcus capsulatus (strain ATCC 33009 / NCIMB 11132 / Bath)).